The sequence spans 229 residues: Large ribosomal subunit protein uL1 (229 aa).

The protein belongs to the universal ribosomal protein uL1 family. As to quaternary structure, part of the 50S ribosomal subunit.

Its function is as follows. Binds directly to 23S rRNA. The L1 stalk is quite mobile in the ribosome, and is involved in E site tRNA release. In terms of biological role, protein L1 is also a translational repressor protein, it controls the translation of the L11 operon by binding to its mRNA. In Pelagibacter ubique (strain HTCC1062), this protein is Large ribosomal subunit protein uL1.